Consider the following 206-residue polypeptide: ATP-dependent dethiobiotin synthetase BioD (206 aa).

12-17 (DSGKTL) contacts ATP. Thr16 serves as a coordination point for Mg(2+). Lys32 is a catalytic residue. Glu99 is a Mg(2+) binding site. Residue 99–102 (EGAG) participates in ATP binding.

The protein belongs to the dethiobiotin synthetase family. Homodimer. The cofactor is Mg(2+).

Its subcellular location is the cytoplasm. The enzyme catalyses (7R,8S)-7,8-diammoniononanoate + CO2 + ATP = (4R,5S)-dethiobiotin + ADP + phosphate + 3 H(+). It participates in cofactor biosynthesis; biotin biosynthesis; biotin from 7,8-diaminononanoate: step 1/2. Catalyzes a mechanistically unusual reaction, the ATP-dependent insertion of CO2 between the N7 and N8 nitrogen atoms of 7,8-diaminopelargonic acid (DAPA, also called 7,8-diammoniononanoate) to form a ureido ring. The polypeptide is ATP-dependent dethiobiotin synthetase BioD (Cytophaga hutchinsonii (strain ATCC 33406 / DSM 1761 / CIP 103989 / NBRC 15051 / NCIMB 9469 / D465)).